The chain runs to 225 residues: Uracil-DNA glycosylase (225 aa).

The Proton acceptor role is filled by D68.

The protein belongs to the uracil-DNA glycosylase (UDG) superfamily. UNG family.

Its subcellular location is the cytoplasm. The enzyme catalyses Hydrolyzes single-stranded DNA or mismatched double-stranded DNA and polynucleotides, releasing free uracil.. Functionally, excises uracil residues from the DNA which can arise as a result of misincorporation of dUMP residues by DNA polymerase or due to deamination of cytosine. The sequence is that of Uracil-DNA glycosylase from Parafrankia sp. (strain EAN1pec).